The chain runs to 149 residues: Large ribosomal subunit protein uL15 (149 aa).

The segment at 1 to 64 (MVELHDLQPH…GQTPLYMRIP (64 aa)) is disordered. A compositionally biased stretch (basic residues) spans 31 to 40 (TAGRGHKGQK).

The protein belongs to the universal ribosomal protein uL15 family. As to quaternary structure, part of the 50S ribosomal subunit.

Binds to the 23S rRNA. This Aquifex aeolicus (strain VF5) protein is Large ribosomal subunit protein uL15.